The sequence spans 396 residues: S-adenosylmethionine synthase (396 aa).

H16 is a binding site for ATP. Mg(2+) is bound at residue D18. E44 contributes to the K(+) binding site. L-methionine contacts are provided by E57 and Q100. Residues 100-110 (QSPDIAQGVDR) form a flexible loop region. Residues 167–169 (DAK), 233–234 (RF), D242, 248–249 (RK), A265, and K269 each bind ATP. D242 contacts L-methionine. K273 lines the L-methionine pocket.

The protein belongs to the AdoMet synthase family. Homotetramer; dimer of dimers. Requires Mg(2+) as cofactor. K(+) serves as cofactor.

It is found in the cytoplasm. It carries out the reaction L-methionine + ATP + H2O = S-adenosyl-L-methionine + phosphate + diphosphate. The protein operates within amino-acid biosynthesis; S-adenosyl-L-methionine biosynthesis; S-adenosyl-L-methionine from L-methionine: step 1/1. Catalyzes the formation of S-adenosylmethionine (AdoMet) from methionine and ATP. The overall synthetic reaction is composed of two sequential steps, AdoMet formation and the subsequent tripolyphosphate hydrolysis which occurs prior to release of AdoMet from the enzyme. This chain is S-adenosylmethionine synthase, found in Paraburkholderia xenovorans (strain LB400).